Here is a 575-residue protein sequence, read N- to C-terminus: Transcription factor ncaA (575 aa).

Polar residues-rich tracts occupy residues 1–15 (MAET…TPEN) and 22–34 (DNQS…SKNP). 2 disordered regions span residues 1 to 40 (MAET…VKDR) and 79 to 114 (IRSG…AGGE). Residues 39–66 (DRKCQYCHQAFTSSSLGRHLDQYLFKKK) form a UBZ4-type; degenerate zinc finger. Positions 93–102 (GKRDTPERAM) are enriched in basic and acidic residues. A coiled-coil region spans residues 337-371 (FAREVEKRKTLDEQLARVQQEANQLRAQVEKLGSC). Residues 429-575 (GRVGVGYGNP…ASGPPPSSGA (147 aa)) form a disordered region. Positions 440–454 (LDDRSSADTKARATE) are enriched in basic and acidic residues. A compositionally biased stretch (low complexity) spans 455–471 (EPPASAALASTSTSAPP). Positions 472–485 (SAHPPPRALQPAPG) are enriched in pro residues. 2 stretches are compositionally biased toward polar residues: residues 493–513 (DQSS…TSPY) and 538–558 (SAAN…HQSL).

As to quaternary structure, interacts with atrR.

Its subcellular location is the nucleus. Its function is as follows. Transcription factor required for normal voriconazole resistance. Contributes to the function of atrR and regulates the expression of the atrR target gene abcG1. The polypeptide is Transcription factor ncaA (Aspergillus fumigatus (strain ATCC MYA-4609 / CBS 101355 / FGSC A1100 / Af293) (Neosartorya fumigata)).